Reading from the N-terminus, the 191-residue chain is MIRISDAAQAHFAKLLANQEEGTQIRVFVINPGTPNAECGVSYCPPDAVEATDTALKFDLLTAYVDELSAPYLEDAEIDFVTDQLGSQLTLKAPNAKMRKVADDAPLMERVEYVLQSQINPQLAGHGGRVSLMEITDEGYAILQFGGGCNGCSMVDVTLKEGIEKQLLNEFPELKGVRDLTEHQRGEHSYY.

[4Fe-4S] cluster contacts are provided by Cys149 and Cys152.

This sequence belongs to the NfuA family. In terms of assembly, homodimer. [4Fe-4S] cluster is required as a cofactor.

Its function is as follows. Involved in iron-sulfur cluster biogenesis. Binds a 4Fe-4S cluster, can transfer this cluster to apoproteins, and thereby intervenes in the maturation of Fe/S proteins. Could also act as a scaffold/chaperone for damaged Fe/S proteins. The protein is Fe/S biogenesis protein NfuA of Salmonella arizonae (strain ATCC BAA-731 / CDC346-86 / RSK2980).